The primary structure comprises 200 residues: NADH-quinone oxidoreductase subunit C (200 aa).

The protein belongs to the complex I 30 kDa subunit family. In terms of assembly, NDH-1 is composed of 14 different subunits. Subunits NuoB, C, D, E, F, and G constitute the peripheral sector of the complex.

The protein resides in the cell inner membrane. The enzyme catalyses a quinone + NADH + 5 H(+)(in) = a quinol + NAD(+) + 4 H(+)(out). NDH-1 shuttles electrons from NADH, via FMN and iron-sulfur (Fe-S) centers, to quinones in the respiratory chain. The immediate electron acceptor for the enzyme in this species is believed to be ubiquinone. Couples the redox reaction to proton translocation (for every two electrons transferred, four hydrogen ions are translocated across the cytoplasmic membrane), and thus conserves the redox energy in a proton gradient. The chain is NADH-quinone oxidoreductase subunit C from Cereibacter sphaeroides (strain ATCC 17029 / ATH 2.4.9) (Rhodobacter sphaeroides).